The primary structure comprises 35 residues: Coenzyme PQQ synthesis protein A (35 aa).

Residues 16 to 20 constitute a cross-link (pyrroloquinoline quinone (Glu-Tyr)); that stretch reads EINMY.

Belongs to the PqqA family.

It functions in the pathway cofactor biosynthesis; pyrroloquinoline quinone biosynthesis. In terms of biological role, required for coenzyme pyrroloquinoline quinone (PQQ) biosynthesis. PQQ is probably formed by cross-linking a specific glutamate to a specific tyrosine residue and excising these residues from the peptide. This is Coenzyme PQQ synthesis protein A from Ruegeria pomeroyi (strain ATCC 700808 / DSM 15171 / DSS-3) (Silicibacter pomeroyi).